Consider the following 270-residue polypeptide: Phosphatidylglycerol--prolipoprotein diacylglyceryl transferase (270 aa).

4 consecutive transmembrane segments (helical) span residues 18 to 38 (IAVHWYGIIIGLGALLGLWLA), 55 to 75 (LVLFAIPIAILCARAYYVIFQ), 89 to 109 (IWNGGLAIHGGLIGAVLTGII), and 115 to 135 (GLSFWKLADIAAPSILLGQAI). Arg-137 contributes to the a 1,2-diacyl-sn-glycero-3-phospho-(1'-sn-glycerol) binding site. 3 consecutive transmembrane segments (helical) span residues 177 to 197 (QPTFLYESLWSFTGVVVLLLL), 205 to 225 (GELFLIYVIWYSMGRYFIEGL), and 236 to 256 (LRIAQVISIVLILCAAALIAY).

It belongs to the Lgt family.

It localises to the cell membrane. It carries out the reaction L-cysteinyl-[prolipoprotein] + a 1,2-diacyl-sn-glycero-3-phospho-(1'-sn-glycerol) = an S-1,2-diacyl-sn-glyceryl-L-cysteinyl-[prolipoprotein] + sn-glycerol 1-phosphate + H(+). Its pathway is protein modification; lipoprotein biosynthesis (diacylglyceryl transfer). Its function is as follows. Catalyzes the transfer of the diacylglyceryl group from phosphatidylglycerol to the sulfhydryl group of the N-terminal cysteine of a prolipoprotein, the first step in the formation of mature lipoproteins. This chain is Phosphatidylglycerol--prolipoprotein diacylglyceryl transferase, found in Bacillus licheniformis (strain ATCC 14580 / DSM 13 / JCM 2505 / CCUG 7422 / NBRC 12200 / NCIMB 9375 / NCTC 10341 / NRRL NRS-1264 / Gibson 46).